The sequence spans 311 residues: Tryptophan 2,3-dioxygenase (311 aa).

The interval 1-37 is disordered; that stretch reads MQPPGGDAPAGCPFSGARAAQPAQAAHEAPHVPGEAD. A compositionally biased stretch (low complexity) spans 17–27; it reads ARAAQPAQAAH. Substrate contacts are provided by residues 80-84, Tyr-142, and Arg-146; that span reads FIIQH. His-269 is a heme binding site. Thr-283 serves as a coordination point for substrate.

The protein belongs to the tryptophan 2,3-dioxygenase family. As to quaternary structure, homotetramer. Heme is required as a cofactor.

The enzyme catalyses L-tryptophan + O2 = N-formyl-L-kynurenine. It participates in amino-acid degradation; L-tryptophan degradation via kynurenine pathway; L-kynurenine from L-tryptophan: step 1/2. Its function is as follows. Heme-dependent dioxygenase that catalyzes the oxidative cleavage of the L-tryptophan (L-Trp) pyrrole ring and converts L-tryptophan to N-formyl-L-kynurenine. Catalyzes the oxidative cleavage of the indole moiety. The polypeptide is Tryptophan 2,3-dioxygenase (Burkholderia cenocepacia (strain ATCC BAA-245 / DSM 16553 / LMG 16656 / NCTC 13227 / J2315 / CF5610) (Burkholderia cepacia (strain J2315))).